Reading from the N-terminus, the 475-residue chain is Aspartyl/glutamyl-tRNA(Asn/Gln) amidotransferase subunit B (475 aa).

This sequence belongs to the GatB/GatE family. GatB subfamily. As to quaternary structure, heterotrimer of A, B and C subunits.

It catalyses the reaction L-glutamyl-tRNA(Gln) + L-glutamine + ATP + H2O = L-glutaminyl-tRNA(Gln) + L-glutamate + ADP + phosphate + H(+). The catalysed reaction is L-aspartyl-tRNA(Asn) + L-glutamine + ATP + H2O = L-asparaginyl-tRNA(Asn) + L-glutamate + ADP + phosphate + 2 H(+). In terms of biological role, allows the formation of correctly charged Asn-tRNA(Asn) or Gln-tRNA(Gln) through the transamidation of misacylated Asp-tRNA(Asn) or Glu-tRNA(Gln) in organisms which lack either or both of asparaginyl-tRNA or glutaminyl-tRNA synthetases. The reaction takes place in the presence of glutamine and ATP through an activated phospho-Asp-tRNA(Asn) or phospho-Glu-tRNA(Gln). In Chlorobaculum tepidum (strain ATCC 49652 / DSM 12025 / NBRC 103806 / TLS) (Chlorobium tepidum), this protein is Aspartyl/glutamyl-tRNA(Asn/Gln) amidotransferase subunit B.